Reading from the N-terminus, the 538-residue chain is Lipid scramblase CLPTM1L (538 aa).

Residues 1–10 (MWSGRSSFTS) lie on the Cytoplasmic side of the membrane. Residues 11–31 (LVVGVFVVYVVHTCWVMYGIV) traverse the membrane as a helical segment. Residues 32–284 (YTRPCSGDAN…VKGIFVDTNL (253 aa)) are Extracellular-facing. 3 N-linked (GlcNAc...) asparagine glycosylation sites follow: Asn-91, Asn-101, and Asn-229. The helical transmembrane segment at 285-305 (YFLALTFFVAAFHLLFDFLAF) threads the bilayer. Residues 306–324 (KNDISFWKKKKSMIGMSTK) lie on the Cytoplasmic side of the membrane. The chain crosses the membrane as a helical span at residues 325–342 (AVLWRCFSTVVIFLFLLD). The Extracellular segment spans residues 343-346 (EQTS). Residues 347 to 364 (LLVLVPAGVGAAIELWKV) form a helical membrane-spanning segment. The Cytoplasmic segment spans residues 365–402 (KKALKMTIFWRGLMPEFQFGTYSESERKTEEYDTQAMK). Residues 403-423 (YLSYLLYPLCVGGAVYSLLNI) traverse the membrane as a helical segment. Residues 424–428 (KYKSW) lie on the Extracellular side of the membrane. The helical transmembrane segment at 429 to 449 (YSWLINSFVNGVYAFGFLFML) threads the bilayer. The Cytoplasmic segment spans residues 450–538 (PQLFVNYKLK…EKATRAPHTD (89 aa)).

This sequence belongs to the CLPTM1 family. As to expression, ubiquitously expressed.

It is found in the endoplasmic reticulum membrane. It catalyses the reaction a 6-(alpha-D-glucosaminyl)-1-(1,2-diacyl-sn-glycero-3-phospho)-1D-myo-inositol(in) = a 6-(alpha-D-glucosaminyl)-1-(1,2-diacyl-sn-glycero-3-phospho)-1D-myo-inositol(out). The catalysed reaction is 6-(alpha-D-glucosaminyl)-(1-octadecanoyl,2-(9Z)-octadecenoyl-sn-glycero-3-phospho)-1D-myo-inositol(in) = 6-(alpha-D-glucosaminyl)-(1-octadecanoyl,2-(9Z)-octadecenoyl-sn-glycero-3-phospho)-1D-myo-inositol(out). The enzyme catalyses a 1,2-diacyl-sn-glycero-3-phospho-(1D-myo-inositol)(in) = a 1,2-diacyl-sn-glycero-3-phospho-(1D-myo-inositol)(out). It carries out the reaction a 1,2-diacyl-sn-glycero-3-phosphocholine(in) = a 1,2-diacyl-sn-glycero-3-phosphocholine(out). It catalyses the reaction a 1,2-diacyl-sn-glycero-3-phosphoethanolamine(in) = a 1,2-diacyl-sn-glycero-3-phosphoethanolamine(out). Its function is as follows. Scramblase that mediates the translocation of glucosaminylphosphatidylinositol (alpha-D-GlcN-(1-6)-(1,2-diacyl-sn-glycero-3-phospho)-1D-myo-inositol, GlcN-PI) across the endoplasmic reticulum (ER) membrane, from the cytosolic leaflet to the luminal leaflet of the ER membrane, where it participates in the biosynthesis of glycosylphosphatidylinositol (GPI). GPI is a lipid glycoconjugate involved in post-translational modification of proteins. Can also translocate 1,2-diacyl-sn-glycero-3-phospho-(1D-myo-inositol) (phosphatidylinositol or PI), as well as several other phospholipids (1,2-diacyl-sn-glycero-3-phosphocholine, 1,2-diacyl-sn-glycero-3-phosphoethanolamine), and N-acetylglucosaminylphosphatidylinositol (GlcNAc-PI) in vitro. The polypeptide is Lipid scramblase CLPTM1L (CLPTM1L) (Homo sapiens (Human)).